We begin with the raw amino-acid sequence, 570 residues long: CRISPR-associated protein Cas8a1/Csx13 (570 aa).

2 disordered regions span residues 1–23 (MACMAPRGPAAIPHPSSERAGLR) and 551–570 (GGEAAELEDADEAAGASEQS).

It belongs to the CRISPR-associated protein Cas8a1/Csx13 family. Myxan subtype subfamily.

Its function is as follows. CRISPR (clustered regularly interspaced short palindromic repeat) is an adaptive immune system that provides protection against mobile genetic elements (viruses, transposable elements and conjugative plasmids). CRISPR clusters contain spacers, sequences complementary to antecedent mobile elements, and target invading nucleic acids. CRISPR clusters are transcribed and processed into CRISPR RNA (crRNA). Functionally, functions in an unknown fashion to stimulate transcription of fruA independently of the intracellular A- and E-developmental signals. This Myxococcus xanthus (strain DK1622) protein is CRISPR-associated protein Cas8a1/Csx13 (devT).